The following is a 38-amino-acid chain: Mu-hexatoxin-Mg1b (38 aa).

Disulfide bonds link Cys1–Cys15, Cys8–Cys20, and Cys14–Cys34. Position 38 is a serine amide (Ser38).

This sequence belongs to the neurotoxin 14 (magi-1) family. 09 (magi-1) subfamily. Expressed by the venom gland.

It is found in the secreted. In terms of biological role, insecticidal neurotoxin. Shows competition for site 3 of insect voltage-gated sodium channels (Nav). This is Mu-hexatoxin-Mg1b from Macrothele gigas (Japanese funnel web spider).